Consider the following 508-residue polypeptide: Aspartic proteinase yapsin-3 (508 aa).

An N-terminal signal peptide occupies residues 1–20 (MKLQLAAVATLAVLTSPAFG). Residues 21 to 47 (RVLPDGKYVKIPFTKKKNGDNGELSKR) constitute a propeptide that is removed on maturation. Positions 63–394 (YSVELAIGTP…DLDNYEISLA (332 aa)) constitute a Peptidase A1 domain. N-linked (GlcNAc...) asparagine glycosylation occurs at N75. D81 is a catalytic residue. N120, N160, N163, and N275 each carry an N-linked (GlcNAc...) asparagine glycan. D288 is an active-site residue. N-linked (GlcNAc...) asparagine glycans are attached at residues N309, N328, N367, N422, N445, and N462. The span at 448–468 (STATTTRSTTTKKTNSTTTAK) shows a compositional bias: low complexity. The tract at residues 448–476 (STATTTRSTTTKKTNSTTTAKSTHKSKRA) is disordered. N483 carries GPI-anchor amidated asparagine lipidation. A propeptide spans 484–508 (SASSIRSTLGLLLVPSLLILSVFFS) (removed in mature form).

It belongs to the peptidase A1 family. Can also be processed to start at Phe-54.

The protein localises to the cell membrane. Functionally, cleaves proteins C-terminally to mono- and paired-basic residues. Required for cell wall integrity. This is Aspartic proteinase yapsin-3 (YPS3) from Saccharomyces cerevisiae (strain ATCC 204508 / S288c) (Baker's yeast).